We begin with the raw amino-acid sequence, 414 residues long: MVSTFSRQDQNYKNDDLNQPSKEGRFGKYGGQYVPETLMPALFELETAASNAWKDKLFVKELNHLLKTYVGRETPLYEAKRLTEHYKTKHATTRIWLKREDLNHTGAHKINNALGQALLAIRMGKKRIIAETGAGQHGVATATVCARFGMKCIIYMGAEDIKRQSLNVFRMKLLGAEVKVVNSGTATLKDATSEAIRDWVSNVETTHYILGSVAGPHPFPKIVRDFHAVIGEETKKQCQESFGSLPDILLACVGGGSNAMGLFHPFIKETSVRLIGVEAAGSGVDTDKHAATITKGSVGILHGSMSLLLQDDNGQVQEAHSISAGLDYPGVGPEHSHLKDIGRAEYGSVTDQEALDALRLVSELEGIIPALETSHAFAWLDKLCPTLEKDTHIVINCSGRGDKDVNTVASSLDI.

The segment at 1 to 26 is disordered; sequence MVSTFSRQDQNYKNDDLNQPSKEGRF. Residues 10–26 are compositionally biased toward basic and acidic residues; that stretch reads QNYKNDDLNQPSKEGRF. Position 109 is an N6-(pyridoxal phosphate)lysine (lysine 109).

The protein belongs to the TrpB family. As to quaternary structure, tetramer of two alpha and two beta chains. The cofactor is pyridoxal 5'-phosphate.

It carries out the reaction (1S,2R)-1-C-(indol-3-yl)glycerol 3-phosphate + L-serine = D-glyceraldehyde 3-phosphate + L-tryptophan + H2O. It participates in amino-acid biosynthesis; L-tryptophan biosynthesis; L-tryptophan from chorismate: step 5/5. In terms of biological role, the beta subunit is responsible for the synthesis of L-tryptophan from indole and L-serine. This is Tryptophan synthase beta chain from Prochlorococcus marinus (strain MIT 9312).